The following is a 129-amino-acid chain: M-zodatoxin-Lt8j (129 aa).

The first 20 residues, 1–20, serve as a signal peptide directing secretion; sequence MKYFVVALALVAAFACIAES. Residues 21 to 60 constitute a propeptide that is removed on maturation; that stretch reads KPAESEHELAEVEEENELADLEDAVWLEHLADLSDLEEAR.

Belongs to the cationic peptide 06 (cytoinsectotoxin) family. Expressed by the venom gland.

The protein resides in the secreted. In terms of biological role, insecticidal, cytolytic and antimicrobial peptide. Forms voltage-dependent, ion-permeable channels in membranes. At high concentration causes cell membrane lysis. This Lachesana tarabaevi (Spider) protein is M-zodatoxin-Lt8j (cit 1-9).